A 424-amino-acid chain; its full sequence is CinA-like protein (424 aa).

Belongs to the CinA family.

The protein is CinA-like protein of Shewanella pealeana (strain ATCC 700345 / ANG-SQ1).